A 211-amino-acid polypeptide reads, in one-letter code: tRNA (guanine-N(7)-)-methyltransferase (211 aa).

Positions 43, 68, 95, and 117 each coordinate S-adenosyl-L-methionine. The active site involves Asp-117. Substrate is bound by residues Lys-121, Asp-153, and 190–193 (TEYE).

Belongs to the class I-like SAM-binding methyltransferase superfamily. TrmB family.

The enzyme catalyses guanosine(46) in tRNA + S-adenosyl-L-methionine = N(7)-methylguanosine(46) in tRNA + S-adenosyl-L-homocysteine. Its pathway is tRNA modification; N(7)-methylguanine-tRNA biosynthesis. Catalyzes the formation of N(7)-methylguanine at position 46 (m7G46) in tRNA. This chain is tRNA (guanine-N(7)-)-methyltransferase, found in Staphylococcus carnosus (strain TM300).